The chain runs to 402 residues: Acetate kinase (402 aa).

Asn10 is a binding site for Mg(2+). Lys17 lines the ATP pocket. Arg89 is a binding site for substrate. Asp148 (proton donor/acceptor) is an active-site residue. ATP is bound by residues 208 to 212 (HLGNG), 283 to 285 (DCR), and 334 to 338 (GIGEN). Glu389 lines the Mg(2+) pocket.

Belongs to the acetokinase family. In terms of assembly, homodimer. Mg(2+) is required as a cofactor. Mn(2+) serves as cofactor.

The protein resides in the cytoplasm. The enzyme catalyses acetate + ATP = acetyl phosphate + ADP. The protein operates within metabolic intermediate biosynthesis; acetyl-CoA biosynthesis; acetyl-CoA from acetate: step 1/2. Its function is as follows. Catalyzes the formation of acetyl phosphate from acetate and ATP. Can also catalyze the reverse reaction. In Actinobacillus pleuropneumoniae serotype 5b (strain L20), this protein is Acetate kinase.